We begin with the raw amino-acid sequence, 1116 residues long: Pleckstrin homology domain-containing family A member 5 (1116 aa).

A2 bears the N-acetylalanine mark. Residues 10–43 (ISLPRSWTYGITRGGRVFFINEEAKSTTWLHPVT) enclose the WW 1 domain. The residue at position 55 (S55) is a Phosphoserine. The 34-residue stretch at 56–89 (TDLPTGWEEAYTFEGARYYINHNERKVTCKHPVT) folds into the WW 2 domain. The segment at 140–163 (SPVGRTSRASKKVHNFGKRSNSIK) is disordered. The segment covering 147–156 (RASKKVHNFG) has biased composition (basic residues). Residues 169 to 268 (PVVRRGWLYK…WMKAMLDAAL (100 aa)) enclose the PH domain. Residue K301 forms a Glycyl lysine isopeptide (Lys-Gly) (interchain with G-Cter in SUMO2) linkage. S382 and S410 each carry phosphoserine. 2 positions are modified to phosphothreonine: T438 and T460. The tract at residues 459–495 (RTLPRNSKTRPESICSVTPSTHDKTLGPGAEEKRRSM) is disordered. Residues 479 to 495 (THDKTLGPGAEEKRRSM) are compositionally biased toward basic and acidic residues. Phosphoserine is present on residues S568, S607, S809, S855, S933, and S937. 2 disordered regions span residues 928-978 (GASD…PATE) and 1025-1116 (RNKD…FMCV). Residues 930–949 (SDQSPLQSPSNLRDNPFRTT) show a composition bias toward polar residues. Residues 952 to 978 (RRRDDKELDTAIRENDVKPDHETPATE) are compositionally biased toward basic and acidic residues. Polar residues predominate over residues 1036-1046 (FSPQDETQTAN). Residues 1047 to 1061 (HKPEEHPEENTKNSV) show a composition bias toward basic and acidic residues. A compositionally biased stretch (polar residues) spans 1070–1085 (SYESTPEVSRGNQTMA). The span at 1088 to 1101 (SLSPSPESSASPVP) shows a compositional bias: low complexity.

As to expression, highly expressed in heart and kidney.

The protein localises to the cytoplasm. This is Pleckstrin homology domain-containing family A member 5 (PLEKHA5) from Homo sapiens (Human).